The chain runs to 1463 residues: Regulating synaptic membrane exocytosis protein 1 (1463 aa).

Positions 1–26 are disordered; the sequence is MSSAVGPRGPRPPTVPPPMQELPDLS. Residues 9–20 show a composition bias toward pro residues; that stretch reads GPRPPTVPPPMQ. The RabBD domain occupies 22-205; the sequence is LPDLSHLTEE…TKSGAWFFGS (184 aa). The FYVE-type zinc-finger motif lies at 133–193; that stretch reads KDDAPTCGIC…VCNLCRKQQE (61 aa). Zn(2+) contacts are provided by cysteine 139, cysteine 142, cysteine 155, cysteine 158, cysteine 163, cysteine 166, cysteine 185, and cysteine 188. Positions 205-393 are disordered; that stretch reads SGPQQPSQDG…DVELESESVS (189 aa). Residues 206-222 show a composition bias toward polar residues; it reads GPQQPSQDGTLSDTATG. Positions 227–240 are enriched in basic and acidic residues; it reads VPREKKARLQERSR. Residues 241-256 show a composition bias toward polar residues; that stretch reads SQTPLSTAAVSSQDTA. Residues 327-372 are compositionally biased toward basic and acidic residues; the sequence is ADERERKERRETRRLEKGRSQDYPDRLEKREDGRVAEDEKQRKEEE. Over residues 381-391 the composition is skewed to acidic residues; sequence SCEDVELESES. A Phosphoserine modification is found at serine 413. In terms of domain architecture, PDZ spans 440-526; it reads RTTMPKESGA…EPQVEIIVSR (87 aa). The disordered stretch occupies residues 533 to 567; it reads RIPESSHPPLESSSSSFESQKMERPSISVISPTSP. Positions 535–551 are enriched in low complexity; that stretch reads PESSHPPLESSSSSFES. 2 positions are modified to phosphoserine: serine 563 and serine 566. A C2 1 domain is found at 577–700; that stretch reads LPGQLSVKLW…ALLDDEPHWY (124 aa). Residues 705–856 form a disordered region; that stretch reads HDESSLPLPQ…YSSEPDSELL (152 aa). Serine 716 is modified (phosphoserine). A compositionally biased stretch (polar residues) spans 770–779; the sequence is ATTLTVPEQQ. Serine 812 carries the post-translational modification Phosphoserine. Residues 827-844 are compositionally biased toward basic and acidic residues; it reads RHHDASRSLADHRSRHAE. Serine 866 is subject to Phosphoserine. The disordered stretch occupies residues 874–1049; sequence SELQPSLDRA…RQLPQVPVRS (176 aa). The segment covering 928 to 941 has biased composition (basic and acidic residues); the sequence is PENDRHSRKSERSS. Residues 1021–1035 are compositionally biased toward polar residues; it reads QGSPTQSPPADTSFG. Serine 1023 is modified (phosphoserine). Position 1025 is a phosphothreonine (threonine 1025). Phosphoserine occurs at positions 1027, 1079, 1081, 1082, 1110, 1111, and 1113. Residues 1104 to 1161 are disordered; that stretch reads DNASAKSSDSDVSDVSAISRASSTSRLSSTSFMSEQSERPRGRISSFTPKMQGRRMGT. Residues 1116-1137 are compositionally biased toward low complexity; it reads SDVSAISRASSTSRLSSTSFMS. Serine 1187 is modified (phosphoserine). A disordered region spans residues 1216–1266; it reads RSRSTSQLSQTESGHKKLKSTIQRSTETGMAAEMRKMVRQPSRESTDGSIN. Residues 1248 to 1261 are compositionally biased toward basic and acidic residues; the sequence is EMRKMVRQPSREST. The C2 2 domain maps to 1309-1427; that stretch reads AMGDIQIGME…DLSSMVIGWY (119 aa). Residues serine 1448, serine 1451, serine 1454, and serine 1463 each carry the phosphoserine modification.

As to quaternary structure, binds SNAP25, SYT1 and CACNA1B. Interaction with SYT1 is enhanced by calcium ions. Interaction with SNAP25 is weaker in the presence of calcium ions. Interacts with TSPOAP1 and RIMBP2; interacts with PPFIA3 and PPFIA4. Interacts with ERC1. Interacts with RAB3A, RAB3B and RAB3D that have been activated by GTP-binding. Interacts with RAB3C, RAB10, RAB26 and RAB37. Binds UNC13A. In terms of processing, phosphorylated by BRSK1.

Its subcellular location is the cell membrane. It localises to the synapse. The protein resides in the presynaptic cell membrane. Its function is as follows. Rab effector involved in exocytosis. May act as scaffold protein that regulates neurotransmitter release at the active zone. Essential for maintaining normal probability of neurotransmitter release and for regulating release during short-term synaptic plasticity. Plays a role in dendrite formation by melanocytes. This is Regulating synaptic membrane exocytosis protein 1 (Rims1) from Mus musculus (Mouse).